The chain runs to 74 residues: uncharacterized protein (74 aa).

The protein to U.parvum UU416.

This is an uncharacterized protein from Mycoplasma pneumoniae (strain ATCC 29342 / M129 / Subtype 1) (Mycoplasmoides pneumoniae).